The sequence spans 273 residues: Dermonecrotic toxin LspaSicTox-alphaIA2iii (273 aa).

His-5 is an active-site residue. The Mg(2+) site is built by Glu-25 and Asp-27. Residue His-41 is the Nucleophile of the active site. 2 cysteine pairs are disulfide-bonded: Cys-45–Cys-51 and Cys-47–Cys-190. Asp-85 contacts Mg(2+).

It belongs to the arthropod phospholipase D family. Class II subfamily. The cofactor is Mg(2+). In terms of tissue distribution, expressed by the venom gland.

The protein resides in the secreted. The enzyme catalyses an N-(acyl)-sphingosylphosphocholine = an N-(acyl)-sphingosyl-1,3-cyclic phosphate + choline. It carries out the reaction an N-(acyl)-sphingosylphosphoethanolamine = an N-(acyl)-sphingosyl-1,3-cyclic phosphate + ethanolamine. The catalysed reaction is a 1-acyl-sn-glycero-3-phosphocholine = a 1-acyl-sn-glycero-2,3-cyclic phosphate + choline. It catalyses the reaction a 1-acyl-sn-glycero-3-phosphoethanolamine = a 1-acyl-sn-glycero-2,3-cyclic phosphate + ethanolamine. In terms of biological role, dermonecrotic toxins cleave the phosphodiester linkage between the phosphate and headgroup of certain phospholipids (sphingolipid and lysolipid substrates), forming an alcohol (often choline) and a cyclic phosphate. This toxin acts on sphingomyelin (SM). It may also act on ceramide phosphoethanolamine (CPE), lysophosphatidylcholine (LPC) and lysophosphatidylethanolamine (LPE), but not on lysophosphatidylserine (LPS), and lysophosphatidylglycerol (LPG). It acts by transphosphatidylation, releasing exclusively cyclic phosphate products as second products. Induces dermonecrosis, hemolysis, increased vascular permeability, edema, inflammatory response, and platelet aggregation. The polypeptide is Dermonecrotic toxin LspaSicTox-alphaIA2iii (Loxosceles spadicea (Recluse spider)).